The primary structure comprises 355 residues: F-box only protein 32 (355 aa).

The Nuclear localization signal signature appears at 62–67 (KKRKKD). The short motif at 169–173 (LLQTL) is the Nuclear export signal element. In terms of domain architecture, F-box spans 223-271 (LTFTDLPLCLQLNIMQRLSDGRDLVSLGQVAPDLHVLSEDRLLWKKLCQ). Positions 280 to 295 (RKRLILSDKGQLDWKK) match the Bipartite nuclear localization signal motif.

As to quaternary structure, part of the SCF (SKP1-CUL1-F-box) E3 ubiquitin-protein ligase complex SCF(FBXO32) formed of CUL1, SKP1, RBX1 and FBXO32.

It is found in the cytoplasm. The protein localises to the nucleus. The protein operates within protein modification; protein ubiquitination. In terms of biological role, substrate recognition component of a SCF (SKP1-CUL1-F-box protein) E3 ubiquitin-protein ligase complex which mediates the ubiquitination and subsequent proteasomal degradation of target proteins. Probably recognizes and binds to phosphorylated target proteins during skeletal muscle atrophy. Recognizes TERF1. This chain is F-box only protein 32 (FBXO32), found in Bos taurus (Bovine).